The chain runs to 156 residues: Longistatin (156 aa).

The signal sequence occupies residues 1–21; that stretch reads MTHRRLLWALCVAALLGVVAA. EF-hand domains follow at residues 70 to 105 and 123 to 156; these read SQDE…TNHH and DIAS…TNQI. 10 residues coordinate Ca(2+): Asp-83, Asp-85, Asn-87, Lys-89, Glu-94, Asp-135, Asn-137, Asp-139, Phe-141, and Glu-146.

As to quaternary structure, interacts with host fibrin. Interacts with human RAGE/AGER. As to expression, saliva (at protein level). Salivary gland (at protein level). Not detected in midgut, ovary, trachea, Malpighian tubule system, synganglion and cuticle.

It is found in the secreted. It localises to the cytoplasm. Resistant to inhibition by host SERPINE1. Inhibited by PMSF, aprotinin, antipain and leupeptin. Inhibited by Zn(2+). Its function is as follows. Anticoagulant and fibrinolytic protease that modulates blood feeding of ticks on vertebrate hosts. Degrades host fibrinogen and delays fibrin clot formation. Promotes lysis of fibrin clots in the host by activating host plasminogen in the presence of soluble fibrin. Binds Ca(2+). Hydrolyzes serine protease-specific substrates. Required for the formation of a blood pool, an accumulation of blood and tissue fluid developed at the tick's feeding site. Blocks activation of host AGER/RAGE. Reduces AGER/RAGE-dependent production of reactive oxygen species (ROS) in human endothelial cells. Prevents AGER/RAGE-dependent activation of NF-kappa-B and suppresses expression of adhesion molecules, such as VCAM1, ICAM1 and SELE, and secretion of cytokines, such as CSF3/GCSF and TGF-beta, in human endothelial cells. Suppresses RAGE/AGER-mediated migration of mouse peritoneal resident cells. Reduces AGER/RAGE-mediated inflammation in mice tissues. The sequence is that of Longistatin from Haemaphysalis longicornis (Bush tick).